The primary structure comprises 729 residues: Pentatricopeptide repeat-containing protein At5g01110 (729 aa).

A disordered region spans residues 26–45 (TSSSPVFEPSSSSSSSSSSA). Over residues 27–45 (SSSPVFEPSSSSSSSSSSA) the composition is skewed to low complexity. 17 PPR repeats span residues 112 to 147 (TSLSLSAMIHILVRSGRLSDAQSCLLRMIRRSGVSR), 164 to 198 (NDSVFDLLIRTYVQARKLREAHEAFTLLRSKGFTV), 199 to 233 (SIDACNALIGSLVRIGWVELAWGVYQEISRSGVGI), 234 to 268 (NVYTLNIMVNALCKDGKMEKVGTFLSQVQEKGVYP), 269 to 303 (DIVTYNTLISAYSSKGLMEEAFELMNAMPGKGFSP), 304 to 338 (GVYTYNTVINGLCKHGKYERAKEVFAEMLRSGLSP), 339 to 373 (DSTTYRSLLMEACKKGDVVETEKVFSDMRSRDVVP), 374 to 408 (DLVCFSSMMSLFTRSGNLDKALMYFNSVKEAGLIP), 409 to 443 (DNVIYTILIQGYCRKGMISVAMNLRNEMLQQGCAM), 444 to 478 (DVVTYNTILHGLCKRKMLGEADKLFNEMTERALFP), 479 to 513 (DSYTLTILIDGHCKLGNLQNAMELFQKMKEKRIRL), 514 to 548 (DVVTYNTLLDGFGKVGDIDTAKEIWADMVSKEILP), 549 to 583 (TPISYSILVNALCSKGHLAEAFRVWDEMISKNIKP), 584 to 618 (TVMICNSMIKGYCRSGNASDGESFLEKMISEGFVP), 619 to 649 (DCISYNTLIYGFVREENMSKAFGLVKKMEEE), 656 to 690 (DVFTYNSILHGFCRQNQMKEAEVVLRKMIERGVNP), and 691 to 725 (DRSTYTCMINGFVSQDNLTEAFRIHDEMLQRGFSP).

It belongs to the PPR family. P subfamily.

This chain is Pentatricopeptide repeat-containing protein At5g01110, found in Arabidopsis thaliana (Mouse-ear cress).